A 79-amino-acid polypeptide reads, in one-letter code: Sulfur carrier protein TusA (79 aa).

Cys-17 (cysteine persulfide intermediate) is an active-site residue.

Belongs to the sulfur carrier protein TusA family.

Its subcellular location is the cytoplasm. Its function is as follows. Sulfur carrier protein which probably makes part of a sulfur-relay system. The chain is Sulfur carrier protein TusA from Histophilus somni (strain 129Pt) (Haemophilus somnus).